A 232-amino-acid chain; its full sequence is 2-C-methyl-D-erythritol 4-phosphate cytidylyltransferase (232 aa).

This sequence belongs to the IspD/TarI cytidylyltransferase family. IspD subfamily.

The enzyme catalyses 2-C-methyl-D-erythritol 4-phosphate + CTP + H(+) = 4-CDP-2-C-methyl-D-erythritol + diphosphate. The protein operates within isoprenoid biosynthesis; isopentenyl diphosphate biosynthesis via DXP pathway; isopentenyl diphosphate from 1-deoxy-D-xylulose 5-phosphate: step 2/6. Its function is as follows. Catalyzes the formation of 4-diphosphocytidyl-2-C-methyl-D-erythritol from CTP and 2-C-methyl-D-erythritol 4-phosphate (MEP). The chain is 2-C-methyl-D-erythritol 4-phosphate cytidylyltransferase from Vibrio cholerae serotype O1 (strain ATCC 39315 / El Tor Inaba N16961).